Consider the following 226-residue polypeptide: ATP synthase F(0) complex subunit a (226 aa).

Transmembrane regions (helical) follow at residues 6–26 (FATFITPTILGITTLPIIMLF), 68–88 (WALMLMSLILFIASTNLLGLL), 97–117 (QLSMNIGMAIPLWLATVLMGF), 138–158 (VPMLIIIETISLFIQPVALAV), 164–184 (ITAGHLLIHLIGSATLALCSI), and 193–213 (FIILFLLTILELAVAMIQAYV).

The protein belongs to the ATPase A chain family. In terms of assembly, component of the ATP synthase complex composed at least of ATP5F1A/subunit alpha, ATP5F1B/subunit beta, ATP5MC1/subunit c (homooctomer), MT-ATP6/subunit a, MT-ATP8/subunit 8, ATP5ME/subunit e, ATP5MF/subunit f, ATP5MG/subunit g, ATP5MK/subunit k, ATP5MJ/subunit j, ATP5F1C/subunit gamma, ATP5F1D/subunit delta, ATP5F1E/subunit epsilon, ATP5PF/subunit F6, ATP5PB/subunit b, ATP5PD/subunit d, ATP5PO/subunit OSCP. ATP synthase complex consists of a soluble F(1) head domain (subunits alpha(3) and beta(3)) - the catalytic core - and a membrane F(0) domain - the membrane proton channel (subunits c, a, 8, e, f, g, k and j). These two domains are linked by a central stalk (subunits gamma, delta, and epsilon) rotating inside the F1 region and a stationary peripheral stalk (subunits F6, b, d, and OSCP). Interacts with DNAJC30; interaction is direct.

The protein localises to the mitochondrion inner membrane. The enzyme catalyses H(+)(in) = H(+)(out). In terms of biological role, subunit a, of the mitochondrial membrane ATP synthase complex (F(1)F(0) ATP synthase or Complex V) that produces ATP from ADP in the presence of a proton gradient across the membrane which is generated by electron transport complexes of the respiratory chain. ATP synthase complex consist of a soluble F(1) head domain - the catalytic core - and a membrane F(1) domain - the membrane proton channel. These two domains are linked by a central stalk rotating inside the F(1) region and a stationary peripheral stalk. During catalysis, ATP synthesis in the catalytic domain of F(1) is coupled via a rotary mechanism of the central stalk subunits to proton translocation. With the subunit c (ATP5MC1), forms the proton-conducting channel in the F(0) domain, that contains two crucial half-channels (inlet and outlet) that facilitate proton movement from the mitochondrial intermembrane space (IMS) into the matrix. Protons are taken up via the inlet half-channel and released through the outlet half-channel, following a Grotthuss mechanism. This Osphranter robustus (Wallaroo) protein is ATP synthase F(0) complex subunit a.